A 181-amino-acid chain; its full sequence is Protein Syd (181 aa).

Belongs to the Syd family.

The protein localises to the cell inner membrane. Its function is as follows. Interacts with the SecY protein in vivo. May bind preferentially to an uncomplexed state of SecY, thus functioning either as a chelating agent for excess SecY in the cell or as a regulatory factor that negatively controls the translocase function. The chain is Protein Syd from Escherichia coli O17:K52:H18 (strain UMN026 / ExPEC).